Consider the following 347-residue polypeptide: FMRFamide-related peptides (347 aa).

Positions 1-22 (MGIALMFLLALYQMQSAIHSEI) are cleaved as a signal peptide. Residues 23–102 (IDTPNYAGNS…RYKYDPELEA (80 aa)) constitute a propeptide that is removed on maturation. Phenylalanine amide is present on Phe-114. A Tyrosine amide modification is found at Tyr-146. Phe-157, Phe-168, Phe-179, Phe-190, Phe-201, Phe-212, Phe-223, and Phe-232 each carry phenylalanine amide. Positions 235-240 (SPHEEL) are excised as a propeptide. Phe-250 and Phe-259 each carry phenylalanine amide. Ser-270 carries the post-translational modification Serine amide. Phe-280 is modified (phenylalanine amide). Residues 283-347 (SLKPAAPESK…SVEQDQFFGQ (65 aa)) constitute a propeptide that is removed on maturation. Residues 283–347 (SLKPAAPESK…SVEQDQFFGQ (65 aa)) form a disordered region. A compositionally biased stretch (basic and acidic residues) spans 305 to 320 (SPVDKAMTELFKKQEL). Over residues 321–347 (QDQQVKNGAQATTTQDGSVEQDQFFGQ) the composition is skewed to polar residues.

It belongs to the FARP (FMRFamide related peptide) family. Post-translationally, this precursor includes 13 peptides that have FMRF or related sequences at their C-termini, and other putative neuropeptides.

The protein resides in the secreted. Its function is as follows. In insects, FMRFamide and related peptides have modulatory actions at skeletal neuromuscular junctions, and peptides that are immunologically related to FMRFamide are released into the circulation from neurohemal organs. The chain is FMRFamide-related peptides from Drosophila melanogaster (Fruit fly).